A 99-amino-acid chain; its full sequence is Small integral membrane protein 14 (99 aa).

Residues methionine 1–asparagine 49 are Lumenal-facing. Residues glycine 50–leucine 70 traverse the membrane as a helical segment. Topologically, residues arginine 71–aspartate 99 are cytoplasmic. The interval glycine 77 to aspartate 99 is disordered.

Its subcellular location is the endoplasmic reticulum membrane. The polypeptide is Small integral membrane protein 14 (SMIM14) (Pongo abelii (Sumatran orangutan)).